A 92-amino-acid polypeptide reads, in one-letter code: Small ribosomal subunit protein bS20 (92 aa).

Positions 1-23 (MANTPSAKKRAKQAEKRRSHNAS) are disordered. Residues 7–20 (AKKRAKQAEKRRSH) are compositionally biased toward basic residues.

It belongs to the bacterial ribosomal protein bS20 family.

Its function is as follows. Binds directly to 16S ribosomal RNA. In Pseudomonas savastanoi pv. phaseolicola (strain 1448A / Race 6) (Pseudomonas syringae pv. phaseolicola (strain 1448A / Race 6)), this protein is Small ribosomal subunit protein bS20.